A 249-amino-acid polypeptide reads, in one-letter code: Undecaprenyl-diphosphatase (249 aa).

Transmembrane regions (helical) follow at residues G11–F31, P35–V55, I74–F94, I101–L121, I135–I155, A175–M195, F208–A228, and G229–I249.

The protein belongs to the UppP family.

The protein resides in the cell membrane. The catalysed reaction is di-trans,octa-cis-undecaprenyl diphosphate + H2O = di-trans,octa-cis-undecaprenyl phosphate + phosphate + H(+). Functionally, catalyzes the dephosphorylation of undecaprenyl diphosphate (UPP). The protein is Undecaprenyl-diphosphatase of Methanococcus vannielii (strain ATCC 35089 / DSM 1224 / JCM 13029 / OCM 148 / SB).